The primary structure comprises 453 residues: Keratin, type I cytoskeletal 15 (453 aa).

The segment at 1–102 (MATTLLQTSS…GGDGGLLSGN (102 aa)) is head. A phosphoserine mark is found at serine 16, serine 17, serine 34, serine 48, and serine 56. Positions 103 to 138 (EKITMQNLNDRLASYLEKVRALEEANADLEVKIRDW) are coil 1A. In terms of domain architecture, IF rod spans 103–415 (EKITMQNLND…SLLEGQDARM (313 aa)). The interval 139-157 (YQRQSPTSPERDYSPYFKT) is linker 1. The segment at 158–249 (TDELRDKILA…KNHEEEMKEF (92 aa)) is coil 1B. Residues 250 to 269 (SNQLAGQVNVEMDAAPGVDL) form a linker 12 region. A coil 2 region spans residues 270-411 (TRVLSEMREQ…ATYHSLLEGQ (142 aa)). Lysine 298 participates in a covalent cross-link: Glycyl lysine isopeptide (Lys-Gly) (interchain with G-Cter in SUMO2). Phosphothreonine occurs at positions 299 and 321. A tail region spans residues 412-453 (DARMAGIGTGEASLGGGGGGKVRINVEESVDGKVVSSRKREI). A Glycyl lysine isopeptide (Lys-Gly) (interchain with G-Cter in SUMO1); alternate cross-link involves residue lysine 444. Residue lysine 444 forms a Glycyl lysine isopeptide (Lys-Gly) (interchain with G-Cter in SUMO2); alternate linkage.

Belongs to the intermediate filament family. In terms of assembly, heterotetramer of two type I and two type II keratins. Interacts with NOD2. Expressed in the basal cell layers of several stratified epithelia including esophagus, tongue, stomach, epidermis and hair follicle. In the hair follicle, expression is detected mainly in the basal layer of the outer root sheath (ORS), except just above the follicle bulb where it occurs throughout its thickness. Low expression levels are seen in the single layer of ORS cells around the base of the follicle which increases in the palisade-like cells of the bulb. Also expressed in the basal cells of the sebaceous glands, and expression in the epidermis occurs in a punctate pattern.

This is Keratin, type I cytoskeletal 15 from Ovis aries (Sheep).